The primary structure comprises 506 residues: Maturase K (506 aa).

Belongs to the intron maturase 2 family. MatK subfamily.

It is found in the plastid. The protein resides in the chloroplast. In terms of biological role, usually encoded in the trnK tRNA gene intron. Probably assists in splicing its own and other chloroplast group II introns. The chain is Maturase K from Trifolium lupinaster (Lupine clover).